Here is a 1782-residue protein sequence, read N- to C-terminus: Vitellogenin (1782 aa).

Residues 1–15 form the signal peptide; that stretch reads MKLFVLAAIIAAVSS. A Vitellogenin domain is found at 34 to 812; that stretch reads WQVGKQYRYE…SEDSLLPKDF (779 aa). 2 disordered regions span residues 333 to 367 and 379 to 406; these read HYES…SRRS and VLKK…INDD. A compositionally biased stretch (basic and acidic residues) spans 344–358; sequence ESHEFNFPEQHEHPH. Low complexity predominate over residues 386–400; it reads ESSSGSSSSSADSSS. N569, N587, N1357, N1463, and N1596 each carry an N-linked (GlcNAc...) asparagine glycan. Residues 1449-1638 form the VWFD domain; that stretch reads PYCSIDGTRI…AYSLNEENSD (190 aa). An intrachain disulfide couples C1451 to C1602.

Heterotetramer of two heavy and two light chains. Post-translationally, glycosylated and phosphorylated. Detected in oocytes (at protein level). Produced by the fat body, where it is cleaved before being secreted into hemolymph. Sequestered then by a single class of receptor mediated endocytosis in the ovary.

The protein resides in the secreted. Its subcellular location is the cytoplasm. The protein localises to the cytoplasmic granule. In terms of biological role, precursor of the egg-yolk proteins that are sources of nutrients during embryonic development. This Bombyx mori (Silk moth) protein is Vitellogenin (VG).